Consider the following 122-residue polypeptide: Large ribosomal subunit protein uL14 (122 aa).

It belongs to the universal ribosomal protein uL14 family. In terms of assembly, part of the 50S ribosomal subunit. Forms a cluster with proteins L3 and L19. In the 70S ribosome, L14 and L19 interact and together make contacts with the 16S rRNA in bridges B5 and B8.

In terms of biological role, binds to 23S rRNA. Forms part of two intersubunit bridges in the 70S ribosome. The chain is Large ribosomal subunit protein uL14 from Jannaschia sp. (strain CCS1).